The following is a 1460-amino-acid chain: Probable outer membrane protein PmpC (1460 aa).

A signal peptide spans 1 to 20 (MKFLSATAVFAAALPSITSA). Disordered regions lie at residues 21–48 (SSVE…FTEI), 92–212 (SEEN…PDKD), 279–372 (TPPA…ESGS), 455–549 (TPEE…DSSI), and 993–1021 (VDTS…TAQA). Residues 34–44 (SSRTGSSSSQS) are compositionally biased toward low complexity. Residues 97-114 (QASFQDSAQNQTENASEG) show a composition bias toward polar residues. Low complexity predominate over residues 115-137 (NSPNSENTNQSSTTETESITTDE). Residues 138–155 (QVQNDNESAASVPTTVET) show a composition bias toward polar residues. Residues 290 to 327 (NDPSGSNGNDGSDDSNSSGNTDSNESNPNNSASNNTGS) show a composition bias toward low complexity. The span at 328–358 (ENELSSSTPSAQLPNPATPFLSSVSTNSQPI) shows a compositional bias: polar residues. The segment covering 461-471 (LKSSQLNNQNP) has biased composition (low complexity). Over residues 487–501 (SLETSPITNQDSASS) the composition is skewed to polar residues. Low complexity-rich tracts occupy residues 504-548 (AIFR…SDSS) and 995-1018 (TSTN…STPT). The 294-residue stretch at 1167–1460 (DEVAYNNLWI…MINCGARMTF (294 aa)) folds into the Autotransporter domain.

Belongs to the PMP outer membrane protein family.

The protein resides in the secreted. The protein localises to the cell wall. It localises to the cell outer membrane. The sequence is that of Probable outer membrane protein PmpC (pmpC) from Chlamydia muridarum (strain MoPn / Nigg).